We begin with the raw amino-acid sequence, 916 residues long: Neurofilament medium polypeptide (916 aa).

Polar residues predominate over residues 1–10 (MSYTLDSLGN). A disordered region spans residues 1-51 (MSYTLDSLGNPSAYRRVTETRSSFSRVSGSPSSGFRSQSWSRGSPSTVSSS). Residue serine 2 is modified to N-acetylserine. Residues 2–104 (SYTLDSLGNP…KLSRSNEKEQ (103 aa)) are head. Positions 21-44 (RSSFSRVSGSPSSGFRSQSWSRGS) are enriched in low complexity. At serine 30 the chain carries Phosphoserine. Arginine 42 carries the omega-N-methylarginine modification. Threonine 47 is a glycosylation site (O-linked (GlcNAc) threonine). Phosphoserine is present on serine 99. The region spanning 101–412 (EKEQLQGLND…KLLEGEETRF (312 aa)) is the IF rod domain. A coil 1A region spans residues 105–136 (LQGLNDRFAGYIEKVHYLEQQNKEIEAEIQAL). Residues 137–149 (RQKQASHAQLGDA) are linker 1. The segment at 150–248 (YDQEIRELRA…EEEVADLLAQ (99 aa)) is coil 1B. Residue serine 226 is modified to Phosphoserine. The tract at residues 249–265 (IQASHITVERKDYLKTD) is linker 12. The coil 2A stretch occupies residues 266-287 (ISTALKEIRSQLESHSDQNMHQ). Residues 288–291 (AEEW) are linker 2. A coil 2B region spans residues 292-412 (FKCRYAKLTE…KLLEGEETRF (121 aa)). At tyrosine 320 the chain carries Phosphotyrosine. Phosphoserine occurs at positions 346 and 418. Positions 413 to 916 (STFAGSITGP…AIVKEVTQSD (504 aa)) are tail. The O-linked (GlcNAc) threonine glycan is linked to threonine 431. Serine 467 and serine 483 each carry phosphoserine. The disordered stretch occupies residues 485–851 (KEEKKEAAEE…KKGGDKSEEK (367 aa)). The span at 493 to 505 (EEKEEEPEAEEEE) shows a compositional bias: acidic residues. Serine 511 carries the phosphoserine modification. The segment covering 521 to 541 (KEEEGEKEEEEGQEEEEEEDE) has biased composition (acidic residues). A compositionally biased stretch (basic and acidic residues) spans 542–561 (GAKSDQAEEGGSEKEGSSEK). Serine 545, serine 553, serine 558, and serine 559 each carry phosphoserine. Acidic residues predominate over residues 562-582 (EEGEQEEGETEAEAEGEEAEA). Threonine 571 is subject to Phosphothreonine. Residues 583-614 (KEEKKVEEKSEEVATKEELVADAKVEKPEKAK) show a composition bias toward basic and acidic residues. 6 consecutive repeat copies span residues 614 to 626 (KSPVPKSPVEEKG), 627 to 639 (KSPVPKSPVEEKG), 640 to 652 (KSPVPKSPVEEKG), 653 to 665 (KSPVPKSPVEEKG), 666 to 678 (KSPVSKSPVEEKA), and 679 to 691 (KSPVPKSPVEEAK). The 6 X 13 AA approximate tandem repeats of K-S-P-V-[PS]-K-S-P-V-E-E-[KA]-[GAK] stretch occupies residues 614–691 (KSPVPKSPVE…VPKSPVEEAK (78 aa)). A phosphoserine mark is found at serine 641 and serine 646. Phosphoserine is present on residues serine 680 and serine 685. Composition is skewed to basic and acidic residues over residues 686 to 701 (PVEEAKSKAEVGKGEQ), 707 to 742 (KEVKEAPKEEKVEKKEEKPKDVPEKKKAESPVKEEA), and 755 to 778 (VHLEKETKEEGKPLQQEKEKEKAG). A Phosphoserine modification is found at serine 736. Phosphoserine occurs at positions 783, 821, and 837. Over residues 788–828 (SDKGAKGSRKEDIAVNGEVEGKEEVEQETKEKGSGREEEKG) the composition is skewed to basic and acidic residues. Residues 839–851 (ADEKKGGDKSEEK) are compositionally biased toward basic and acidic residues.

Belongs to the intermediate filament family. Forms heterodimers with NEFL; which can further hetero-oligomerize (in vitro). Forms heterodimers with INA (in vitro). There are a number of repeats of the tripeptide K-S-P, NFM is phosphorylated on a number of the serines in this motif. It is thought that phosphorylation of NFM results in the formation of interfilament cross bridges that are important in the maintenance of axonal caliber. Post-translationally, phosphorylation seems to play a major role in the functioning of the larger neurofilament polypeptides (NF-M and NF-H), the levels of phosphorylation being altered developmentally and coincidentally with a change in the neurofilament function. In terms of processing, phosphorylated in the head and rod regions by the PKC kinase PKN1, leading to the inhibition of polymerization.

It is found in the cytoplasm. Its subcellular location is the cytoskeleton. The protein resides in the cell projection. It localises to the axon. Functionally, neurofilaments usually contain three intermediate filament proteins: NEFL, NEFM, and NEFH which are involved in the maintenance of neuronal caliber. May additionally cooperate with the neuronal intermediate filament proteins PRPH and INA to form neuronal filamentous networks. In Homo sapiens (Human), this protein is Neurofilament medium polypeptide (NEFM).